Consider the following 369-residue polypeptide: CASP-like protein 4U1 (369 aa).

A disordered region spans residues methionine 1–serine 162. The Cytoplasmic segment spans residues methionine 1–glutamate 222. Over residues threonine 7–proline 23 the composition is skewed to pro residues. Over residues serine 36–alanine 51 the composition is skewed to basic and acidic residues. Low complexity-rich tracts occupy residues alanine 87–glutamate 96 and serine 114–proline 127. The helical transmembrane segment at leucine 223–alanine 243 threads the bilayer. Residues serine 244–arginine 262 lie on the Extracellular side of the membrane. Residues tyrosine 263 to isoleucine 283 form a helical membrane-spanning segment. Over arginine 284–tyrosine 300 the chain is Cytoplasmic. A helical transmembrane segment spans residues cysteine 301–alanine 321. Residues serine 322–lysine 339 lie on the Extracellular side of the membrane. A helical transmembrane segment spans residues isoleucine 340–isoleucine 360. Over serine 361–valine 369 the chain is Cytoplasmic.

It belongs to the Casparian strip membrane proteins (CASP) family. Homodimer and heterodimers.

It is found in the cell membrane. The polypeptide is CASP-like protein 4U1 (Zea mays (Maize)).